A 177-amino-acid polypeptide reads, in one-letter code: Thymidine kinase (177 aa).

An ATP-binding site is contributed by 11-18 (GPMFSGKS). Glu83 serves as the catalytic Proton acceptor. Residue Phe113 coordinates substrate. Zn(2+)-binding residues include Cys138 and Cys141. 157-161 (IEIIG) contributes to the substrate binding site. The Zn(2+) site is built by Cys170 and Cys173.

The protein belongs to the thymidine kinase family. Homotetramer. Two molecules of substrate bind to each enzyme tetramer.

It catalyses the reaction thymidine + ATP = dTMP + ADP + H(+). Its function is as follows. Phosphorylates thymidine and thymidine analogs, such as azidothymidine (AZT). Part of the salvage pathway for pyrimidine deoxyribonucleotide synthesis. In Cynomys gunnisoni (Gunnison's prairie dog), this protein is Thymidine kinase (OPG101).